The chain runs to 330 residues: Olfactory receptor 5P73 (330 aa).

Topologically, residues 1–28 are extracellular; that stretch reads MAFLEDGNHTTVTEFFLLGLTDDPVLRD. N-linked (GlcNAc...) asparagine glycosylation is present at asparagine 8. The chain crosses the membrane as a helical span at residues 29 to 49; the sequence is ILFIIILCIYLVTVSGNLSTI. Topologically, residues 50 to 57 are cytoplasmic; sequence LLIRVSSQ. The chain crosses the membrane as a helical span at residues 58–78; it reads LHHPMYFILSHLASVDIGISS. Residues 79–102 lie on the Extracellular side of the membrane; it reads SVTPNMLATFLVKQNTISYIGCSI. Cysteine 100 and cysteine 192 are joined by a disulfide. Residues 103 to 123 traverse the membrane as a helical segment; the sequence is QFTSAAFFGTVECFLLATMAY. Residues 124–136 are Cytoplasmic-facing; that stretch reads DRFVAICNPLLYS. A helical membrane pass occupies residues 137–157; the sequence is TKMSTEACIQLVVGSYIQGFL. Residues 158–199 lie on the Extracellular side of the membrane; sequence NASFFTLSFFSLFFCGPNRINDFYCDFAPLLELSCSDVTVAV. The helical transmembrane segment at 200–220 threads the bilayer; the sequence is VITSISAGFITLTTVFVIAIS. At 221-240 the chain is on the cytoplasmic side; sequence YSCIFITIMKMHSTESRCKA. Residues 241-261 traverse the membrane as a helical segment; sequence FSTCTSHLTAVILFYGTAIFI. The Extracellular segment spans residues 262-274; it reads YVMPKSSYSTDQN. Residues 275 to 295 traverse the membrane as a helical segment; sequence KVLSIFYTVVIPMLNPLIYSL. The Cytoplasmic segment spans residues 296–330; that stretch reads RNNEIKEALKRHLGKKVFSYGNLFCKTHYNHNYPV.

It belongs to the G-protein coupled receptor 1 family.

The protein resides in the cell membrane. Its function is as follows. Potential odorant receptor. This Mus musculus (Mouse) protein is Olfactory receptor 5P73.